The chain runs to 353 residues: Holliday junction branch migration complex subunit RuvB (353 aa).

Positions 1–183 are large ATPase domain (RuvB-L); sequence MNEPRIVAPQ…FGATYRLDFY (183 aa). ATP is bound by residues L22, R23, G64, K67, T68, T69, 130–132, R173, Y183, and R220; that span reads EDF. Mg(2+) is bound at residue T68. The tract at residues 184-254 is small ATPAse domain (RuvB-S); the sequence is DTAALRAIVE…LARLALDQLA (71 aa). The segment at 257-353 is head domain (RuvB-H); it reads ELGLDEVDRL…HAASERSSDA (97 aa). DNA is bound by residues R312 and R317.

It belongs to the RuvB family. In terms of assembly, homohexamer. Forms an RuvA(8)-RuvB(12)-Holliday junction (HJ) complex. HJ DNA is sandwiched between 2 RuvA tetramers; dsDNA enters through RuvA and exits via RuvB. An RuvB hexamer assembles on each DNA strand where it exits the tetramer. Each RuvB hexamer is contacted by two RuvA subunits (via domain III) on 2 adjacent RuvB subunits; this complex drives branch migration. In the full resolvosome a probable DNA-RuvA(4)-RuvB(12)-RuvC(2) complex forms which resolves the HJ.

The protein resides in the cytoplasm. It catalyses the reaction ATP + H2O = ADP + phosphate + H(+). In terms of biological role, the RuvA-RuvB-RuvC complex processes Holliday junction (HJ) DNA during genetic recombination and DNA repair, while the RuvA-RuvB complex plays an important role in the rescue of blocked DNA replication forks via replication fork reversal (RFR). RuvA specifically binds to HJ cruciform DNA, conferring on it an open structure. The RuvB hexamer acts as an ATP-dependent pump, pulling dsDNA into and through the RuvAB complex. RuvB forms 2 homohexamers on either side of HJ DNA bound by 1 or 2 RuvA tetramers; 4 subunits per hexamer contact DNA at a time. Coordinated motions by a converter formed by DNA-disengaged RuvB subunits stimulates ATP hydrolysis and nucleotide exchange. Immobilization of the converter enables RuvB to convert the ATP-contained energy into a lever motion, pulling 2 nucleotides of DNA out of the RuvA tetramer per ATP hydrolyzed, thus driving DNA branch migration. The RuvB motors rotate together with the DNA substrate, which together with the progressing nucleotide cycle form the mechanistic basis for DNA recombination by continuous HJ branch migration. Branch migration allows RuvC to scan DNA until it finds its consensus sequence, where it cleaves and resolves cruciform DNA. This Thermomicrobium roseum (strain ATCC 27502 / DSM 5159 / P-2) protein is Holliday junction branch migration complex subunit RuvB.